The sequence spans 480 residues: MKVKAVRGIANPLGTIDAHGTVIESIANAGDGVDILNRHREKIGSGFVHLEGDNVILTGYVDEEQYTAEKIEETGLSVGFNANGVKAREIDGVGYYKDVTITEVSLTPLPSNKGAKVTKVREENKGEQEQMGANETQEIMKQAIEAGVKVRELEAKVEELNKEREELKKEREASIPSEKPEDAERKFMRELGSKMAEMPEQGFLREFANGADLNVVNSLGSITSKYARKSGIYDGAMKARFQGLTLAEDGVDDTFISGTFKAGTDKNKSQTATKRSLRPQMAEAYLQMDKATVRGVNDSGALSEYVMSEMVNRVIQKVEYNMILGSVDGSNGFYGLKTATDGWTKQIEYTDLFEGITDAVAECSISDAITIVMSPQTFAELRKAKGTDGHSRFNELATKEQIAQSFGAVNLETRVWMPKDEVAVYNHDEYVLIGDLNVENYNDFDLRYNVEQWLSETLVGGSIRGKNRSAYLKKKGSLGV.

Positions 138–175 (EIMKQAIEAGVKVRELEAKVEELNKEREELKKEREASI) form a coiled coil. The tract at residues 163–184 (EREELKKEREASIPSEKPEDAE) is disordered.

The protein localises to the virion. Assembles to form a prolate capsid about 56 nm in length and 41 nm in width. This chain is Major capsid protein (l5), found in Lactococcus (lactic streptococci).